Here is a 1035-residue protein sequence, read N- to C-terminus: MESTPPPDDCSVKVAVHIRPLIGDERIQGCQDCVTVVTGKPQVQIGSHSFTFDHVYGSSGSPSTEMYEECAAPLVDGLFQGYNATVLAYGQTGSGKTYTMGTGCGDSSQTGIIPQVMNALFTKIETLKQQIEFQIHVSFIEIHKEEVQDLLDPCTVNKSDTNNTGHVGKVAHVPGKPPIQIRETSNGVITLAGSTEVSVSTLKEMAACLDQGSVSRATGSTNMNNQSSRSHAIFTITVEQMRKINTDSPENGAYNGSLKEEYLCAKLHLVDLAGSERAKRTGSDGLRFKEGVHINKGLLALGNVISALGDEKKRKDGAHVPYRDSKLTRLLQDSLGGNSRTVMIACISPADINAEETLNTLKYANRARNIRNKPVVNRDPVSSEMLKMRQQVEYLQAELSLRTGGSSCAEVQALKERIVWLETANEELCRELHEYRSRCPGVEHSEKDFKDIRADDIVGSVRPDGLKRSLHSIESSNYPMVEATTGDSREIDEEAKEWEHKLLQNSMDKELYELNRRLEEKESEMKLFDGYDPAALKQHFGKKIAEVEDEKRSVQEERNRLLAEIENLASDGQAQKLQDVHAQNLKALEAQILDLKKKQESQVQLLKQKQKSDDAARRLQDEIQSIKAQKVQLQHRMKQEAEQFRQWKASREKELLQLRKEGRKSEYERHKLQALNQRQKMVLQRKTEEAAMATKRLKELLEARKSSPREHSAGTNGFGTNGQTNEKSLQRWLDHELEVMVNVHEVRHEYEKQSHVRAALAEELAVLRQVDEFAVKGLSPPRGKNGFARASSLSPNARMARISSLENMLVISSNSLVAMASQLSEAEERERAFTNRGRWNQLRSMGEAKNLLQYMFNSLAETRCQLWEKDVEIKEMKDQFKEIVGLLRQSELRRKEAEKELKLREQAIATSLGTPPSSVKHVAEDLSTPSPMTVPAQKQLKFTPGIANGKVRGPAAFLDTNKKMVPMGQVSMRKLSAVGKQGGRLWRWKRSHHQWIVQFKWKWQKPWRLSEWIRTSDETLLKSKPRLKALPNKIM.

A Kinesin motor domain is found at 11–370; sequence SVKVAVHIRP…LKYANRARNI (360 aa). 90–97 serves as a coordination point for ATP; that stretch reads GQTGSGKT. Coiled coils occupy residues 408–436, 504–707, and 881–911; these read CAEV…HEYR, QNSM…RKSS, and KEIV…IATS. The segment at 704–724 is disordered; that stretch reads RKSSPREHSAGTNGFGTNGQT.

Belongs to the TRAFAC class myosin-kinesin ATPase superfamily. Kinesin family. KIN-4 subfamily. In terms of assembly, homodimer. In terms of tissue distribution, expressed in stems and flowers. Detected in cells undergoing secondary wall deposition including developing interfascicular fibers and xylem cells, but also in dividing cells and expanding/elongating parenchyma cells.

It is found in the cytoplasm. The protein resides in the cytoskeleton. Kinesin-like motor protein involved in the control of the oriented deposition of cellulose microfibrils. Its motor activity is directed toward the microtubule's plus end. It possesses the potential to drive long-distance transport of cargo along cortical microtubules. Regulates cell wall mechanics during cell elongation, by the regulation of primary and secondary walls deposition. Contributes to cortical microtubule-mediated trafficking of cell wall components. The polypeptide is Kinesin-like protein KIN-4A (Arabidopsis thaliana (Mouse-ear cress)).